The primary structure comprises 323 residues: Fructose-1,6-bisphosphatase class 1 (323 aa).

E88, D107, L109, and D110 together coordinate Mg(2+). Substrate-binding positions include 110–113 and N200; that span reads DGSS. A Mg(2+)-binding site is contributed by E272.

This sequence belongs to the FBPase class 1 family. In terms of assembly, homotetramer. Mg(2+) is required as a cofactor.

It localises to the cytoplasm. It carries out the reaction beta-D-fructose 1,6-bisphosphate + H2O = beta-D-fructose 6-phosphate + phosphate. It participates in carbohydrate biosynthesis; gluconeogenesis. The polypeptide is Fructose-1,6-bisphosphatase class 1 (Acinetobacter baumannii (strain ACICU)).